We begin with the raw amino-acid sequence, 465 residues long: Probable Xaa-Pro aminopeptidase pepP (465 aa).

The Mn(2+) site is built by aspartate 263, aspartate 274, glutamate 397, and glutamate 437.

It belongs to the peptidase M24B family. It depends on Mn(2+) as a cofactor.

It catalyses the reaction Release of any N-terminal amino acid, including proline, that is linked to proline, even from a dipeptide or tripeptide.. In terms of biological role, catalyzes the removal of a penultimate prolyl residue from the N-termini of peptides. This is Probable Xaa-Pro aminopeptidase pepP (pepP) from Penicillium rubens (strain ATCC 28089 / DSM 1075 / NRRL 1951 / Wisconsin 54-1255) (Penicillium chrysogenum).